Consider the following 416-residue polypeptide: MYLQGFGNYHHSEAVKGALPPNQNSPQHCSLGLYAEQLSGTAFTRPRHNNLRSWLYRILPTVTQGTYYPYEFNIMQPFVDELSPNAMRWSPLYNSSQIKCDFVEGLFHIAGSPLVNTYTYYCNHSMSDKYFANNDGELLFVPYAGEIHLHTEFGKLMLSSGSIAVIPRGVKFKVEVISKEAKGYLCENSGNPLTLPQLGPIGANGLANPRHFQYPVAAFENSGSEHTIICKNQKKLWFTVCNHSPLNVVAWHGNYAPYCYDLSLFNTINTVSFDHPDPSIFTVLTSESEIPGVSNLDFVIFPPRWMVAEHTFRPPYFHRNYMNELMGLVYGEYDAKKEGFIPGGISIHNCMTPHGPDYESYEIAASQDLKPNYINSLAFMFETKDYWQVTEQAYRHPSRQMDYLNCWQGFKIEFSQ.

His275 acts as the Proton acceptor in catalysis. The Fe cation site is built by His318 and Glu324. Homogentisate is bound by residues Tyr333 and His354. His354 contributes to the Fe cation binding site.

This sequence belongs to the homogentisate dioxygenase family. Hexamer; dimer of trimers. Requires Fe cation as cofactor.

The catalysed reaction is homogentisate + O2 = 4-maleylacetoacetate + H(+). Its pathway is amino-acid degradation; L-phenylalanine degradation; acetoacetate and fumarate from L-phenylalanine: step 4/6. Its function is as follows. Involved in the catabolism of homogentisate (2,5-dihydroxyphenylacetate or 2,5-OH-PhAc), a central intermediate in the degradation of phenylalanine and tyrosine. Catalyzes the oxidative ring cleavage of the aromatic ring of homogentisate to yield maleylacetoacetate. This is Homogentisate 1,2-dioxygenase from Legionella pneumophila subsp. pneumophila (strain Philadelphia 1 / ATCC 33152 / DSM 7513).